Reading from the N-terminus, the 90-residue chain is Phosphocarrier protein HPr (90 aa).

Residues 1–89 (MPALEITIIN…ELINNRFDEG (89 aa)) enclose the HPr domain. The active-site Pros-phosphohistidine intermediate is His15.

The protein belongs to the HPr family.

It localises to the cytoplasm. Its function is as follows. General (non sugar-specific) component of the phosphoenolpyruvate-dependent sugar phosphotransferase system (sugar PTS). This major carbohydrate active-transport system catalyzes the phosphorylation of incoming sugar substrates concomitantly with their translocation across the cell membrane. The phosphoryl group from phosphoenolpyruvate (PEP) is transferred to the phosphoryl carrier protein HPr by enzyme I. Phospho-HPr then transfers it to the PTS EIIA domain. This Pseudomonas aeruginosa (strain ATCC 15692 / DSM 22644 / CIP 104116 / JCM 14847 / LMG 12228 / 1C / PRS 101 / PAO1) protein is Phosphocarrier protein HPr (ptsH).